Here is a 1400-residue protein sequence, read N- to C-terminus: Macrophage-stimulating protein receptor (1400 aa).

A signal peptide spans 1-24 (MELLPPLPQSFLLLLLLPAKPAAG). Residues 25–957 (EDWQCPRTPY…PGPDGVPQST (933 aa)) lie on the Extracellular side of the membrane. The region spanning 31 to 522 (RTPYAASRDF…SGDQVFQVPI (492 aa)) is the Sema domain. Asn66 carries an N-linked (GlcNAc...) asparagine glycan. Cystine bridges form between Cys101-Cys104, Cys107-Cys162, Cys135-Cys143, Cys174-Cys177, Cys300-Cys367, Cys385-Cys407, and Cys386-Cys422. N-linked (GlcNAc...) asparagine glycans are attached at residues Asn419, Asn458, and Asn488. Cystine bridges form between Cys527–Cys545, Cys533–Cys567, Cys536–Cys552, and Cys548–Cys558. 3 IPT/TIG domains span residues 569-671 (PKLT…FRVD), 684-767 (PVLI…FQYR), and 770-860 (PVVL…FRFL). 4 N-linked (GlcNAc...) asparagine glycosylation sites follow: Asn654, Asn720, Asn841, and Asn897. A helical membrane pass occupies residues 958–978 (LLGILLPLLLLVAALATALVF). Over 979–1400 (SYWWRRKQLV…RPLSEPPRPT (422 aa)) the chain is Cytoplasmic. The Protein kinase domain occupies 1082–1345 (THSDRVIGKG…VLVGEVEQIV (264 aa)). ATP is bound by residues 1088–1096 (IGKGHFGVV), Lys1114, and 1161–1164 (LPYM). Asp1208 acts as the Proton acceptor in catalysis. Arg1212 is an ATP binding site. Phosphotyrosine; by autocatalysis occurs at positions 1238, 1239, 1353, and 1360. The interval 1367 to 1400 (TSHEMNVRPEQPQFSPMPGNVRRPRPLSEPPRPT) is disordered.

The protein belongs to the protein kinase superfamily. Tyr protein kinase family. Heterodimer of an alpha chain and a beta chain which are disulfide linked. Binds PLXNB1. Associates with and is negatively regulated by HYAL2. Interacts when phosphorylated with downstream effectors including PIK3R1, PCLG1, GRB2 and GAB1. Interacts with integrin beta1/ITGB1 in a ligand-independent fashion. Post-translationally, proteolytic processing yields the two subunits. In terms of processing, autophosphorylated in response to ligand binding on Tyr-1238 and Tyr-1239 in the kinase domain leading to further phosphorylation of Tyr-1353 and Tyr-1360 in the C-terminal multifunctional docking site. Ubiquitinated. Ubiquitination by CBL regulates the receptor stability and activity through proteasomal degradation. Post-translationally, O-mannosylation of IPT/TIG domains on Thr or Ser residues by TMEM260 is required for protein maturation. O-mannosylated residues are composed of single mannose glycans that are not elongated or modified. In terms of tissue distribution, expressed in colon, skin, lung and bone marrow.

The protein resides in the membrane. The enzyme catalyses L-tyrosyl-[protein] + ATP = O-phospho-L-tyrosyl-[protein] + ADP + H(+). Its activity is regulated as follows. In its inactive state, the C-terminal tail interacts with the catalytic domain and inhibits the kinase activity. Upon ligand binding, the C-terminal tail is displaced and becomes phosphorylated, thus increasing the kinase activity. In terms of biological role, receptor tyrosine kinase that transduces signals from the extracellular matrix into the cytoplasm by binding to MST1 ligand. Regulates many physiological processes including cell survival, migration and differentiation. Ligand binding at the cell surface induces autophosphorylation of RON on its intracellular domain that provides docking sites for downstream signaling molecules. Following activation by ligand, interacts with the PI3-kinase subunit PIK3R1, PLCG1 or the adapter GAB1. Recruitment of these downstream effectors by RON leads to the activation of several signaling cascades including the RAS-ERK, PI3 kinase-AKT, or PLCgamma-PKC. RON signaling activates the wound healing response by promoting epithelial cell migration, proliferation as well as survival at the wound site. Also plays a role in the innate immune response by regulating the migration and phagocytic activity of macrophages. Alternatively, RON can also promote signals such as cell migration and proliferation in response to growth factors other than MST1 ligand. The chain is Macrophage-stimulating protein receptor (MST1R) from Homo sapiens (Human).